We begin with the raw amino-acid sequence, 552 residues long: DNA ligase (552 aa).

Glu-244 is an ATP binding site. Lys-246 functions as the N6-AMP-lysine intermediate in the catalytic mechanism. 6 residues coordinate ATP: Arg-251, Arg-266, Glu-296, Phe-336, Arg-408, and Lys-414.

Belongs to the ATP-dependent DNA ligase family. It depends on Mg(2+) as a cofactor.

The enzyme catalyses ATP + (deoxyribonucleotide)n-3'-hydroxyl + 5'-phospho-(deoxyribonucleotide)m = (deoxyribonucleotide)n+m + AMP + diphosphate.. Functionally, DNA ligase that seals nicks in double-stranded DNA during DNA replication, DNA recombination and DNA repair. The sequence is that of DNA ligase from Methanothrix thermoacetophila (strain DSM 6194 / JCM 14653 / NBRC 101360 / PT) (Methanosaeta thermophila).